Here is a 243-residue protein sequence, read N- to C-terminus: tRNA (guanine-N(1)-)-methyltransferase (243 aa).

S-adenosyl-L-methionine-binding positions include Gly-113 and 133 to 138; that span reads IGDFVL.

It belongs to the RNA methyltransferase TrmD family. As to quaternary structure, homodimer.

The protein localises to the cytoplasm. The enzyme catalyses guanosine(37) in tRNA + S-adenosyl-L-methionine = N(1)-methylguanosine(37) in tRNA + S-adenosyl-L-homocysteine + H(+). In terms of biological role, specifically methylates guanosine-37 in various tRNAs. This is tRNA (guanine-N(1)-)-methyltransferase from Bacillus licheniformis (strain ATCC 14580 / DSM 13 / JCM 2505 / CCUG 7422 / NBRC 12200 / NCIMB 9375 / NCTC 10341 / NRRL NRS-1264 / Gibson 46).